The chain runs to 487 residues: Acetylcholine receptor subunit beta-type acr-3 (487 aa).

The N-terminal stretch at 1–20 (MQKIWLFSIITIFLITELQC) is a signal peptide. Over 21-231 (YPNSAEERLL…KIRRKALFYT (211 aa)) the chain is Extracellular. The N-linked (GlcNAc...) asparagine glycan is linked to N46. A disulfide bridge links C151 with C165. The next 3 helical transmembrane spans lie at 232-252 (VILI…FYLP), 259-279 (ITLA…VSKI), and 294-314 (LLMT…IINV). Topologically, residues 315–439 (YFRGPATHIM…WKFVSVVIDR (125 aa)) are cytoplasmic. Positions 380–400 (ISEQPKQTSRKDGSSSEEKLS) are disordered. A helical transmembrane segment spans residues 440-460 (LLLYLFFAVTTGGTVGILLSA).

This sequence belongs to the ligand-gated ion channel (TC 1.A.9) family. Acetylcholine receptor (TC 1.A.9.1) subfamily. In terms of assembly, component of nicotinic acetylcholine receptor. In cholinergic motoneurons, composed of 2 non-alpha subunits acr-2 and acr-3, and 3 alpha subunits unc-38, unc-63 and acr-12.

Its subcellular location is the postsynaptic cell membrane. The protein localises to the cell membrane. In terms of biological role, non-alpha subunit of nicotinic acetylcholine receptor (nAChR). Probably acts in cholinergic motoneurons to regulate presynaptic neurotransmitter release, thereby ensuring normal level of excitation of cholinergic motoneurons during locomotion. The sequence is that of Acetylcholine receptor subunit beta-type acr-3 (acr-3) from Caenorhabditis elegans.